A 237-amino-acid polypeptide reads, in one-letter code: Ribosomal RNA small subunit methyltransferase G (237 aa).

S-adenosyl-L-methionine-binding positions include glycine 78, phenylalanine 83, 129–130 (AE), and arginine 148. The tract at residues 218 to 237 (KKETPNKYPRKAGMPNKRPL) is disordered.

Belongs to the methyltransferase superfamily. RNA methyltransferase RsmG family.

It is found in the cytoplasm. Specifically methylates the N7 position of a guanine in 16S rRNA. The protein is Ribosomal RNA small subunit methyltransferase G of Streptococcus pneumoniae (strain ATCC BAA-255 / R6).